An 89-amino-acid polypeptide reads, in one-letter code: MALTQQRKQEIINNYQVHGTDTGSTDVQIAMLTERINRLSEHLQANKKDHSSRRGLLKLIGHRKRLLAYLQQESREKYQALIGRLGIRG.

The protein belongs to the universal ribosomal protein uS15 family. Part of the 30S ribosomal subunit. Forms a bridge to the 50S subunit in the 70S ribosome, contacting the 23S rRNA.

Its function is as follows. One of the primary rRNA binding proteins, it binds directly to 16S rRNA where it helps nucleate assembly of the platform of the 30S subunit by binding and bridging several RNA helices of the 16S rRNA. In terms of biological role, forms an intersubunit bridge (bridge B4) with the 23S rRNA of the 50S subunit in the ribosome. The sequence is that of Small ribosomal subunit protein uS15 from Nostoc sp. (strain PCC 7120 / SAG 25.82 / UTEX 2576).